A 320-amino-acid chain; its full sequence is Homoserine kinase (320 aa).

100–110 (PLSSGMGSSAA) provides a ligand contact to ATP.

Belongs to the GHMP kinase family. Homoserine kinase subfamily.

The protein resides in the cytoplasm. The catalysed reaction is L-homoserine + ATP = O-phospho-L-homoserine + ADP + H(+). It functions in the pathway amino-acid biosynthesis; L-threonine biosynthesis; L-threonine from L-aspartate: step 4/5. Functionally, catalyzes the ATP-dependent phosphorylation of L-homoserine to L-homoserine phosphate. In Chlorobium phaeovibrioides (strain DSM 265 / 1930) (Prosthecochloris vibrioformis (strain DSM 265)), this protein is Homoserine kinase.